Consider the following 106-residue polypeptide: Biogenesis of lysosome-related organelles complex 1 subunit 4 (106 aa).

Residues 53 to 106 (THSEGLSEQLKMTEKNILEMENLFDQIDQLCLFVQKAKSDLDKLEKLYNVVDRQ) are a coiled coil.

This sequence belongs to the BLOC1S4 family. In terms of assembly, component of the biogenesis of lysosome-related organelles complex-1 (BLOC-1) composed at least of blos-1, blos-2, blos-4, dsbn-1, glo-2, mutd-1 and snpn-1. Interacts with glo-2.

Functionally, component of the biogenesis of lysosome-related organelles complex-1 (BLOC-1) involved in gut granule biogenesis. This chain is Biogenesis of lysosome-related organelles complex 1 subunit 4 (blos-4), found in Caenorhabditis elegans.